The following is a 283-amino-acid chain: NAD(P)H-hydrate epimerase (283 aa).

A mitochondrion-targeting transit peptide spans 1 to 28 (MLGVRALFGIGLLVTSRGGFVLTHTRAC). Positions 61 to 270 (AQQIDEELFS…VLEQKYQLNL (210 aa)) constitute a YjeF N-terminal domain. 115–119 (NNGGD) serves as a coordination point for (6S)-NADPHX. K(+)-binding residues include asparagine 116 and aspartate 180. (6S)-NADPHX contacts are provided by residues 184–190 (GFSFKGA) and aspartate 213. Serine 216 contributes to the K(+) binding site.

This sequence belongs to the NnrE/AIBP family. As to quaternary structure, homodimer. Interacts with apoa1a. Binds to high-density lipoprotein. Requires K(+) as cofactor.

The protein resides in the mitochondrion. The protein localises to the secreted. The enzyme catalyses (6R)-NADHX = (6S)-NADHX. The catalysed reaction is (6R)-NADPHX = (6S)-NADPHX. In terms of biological role, catalyzes the epimerization of the S- and R-forms of NAD(P)HX, a damaged form of NAD(P)H that is a result of enzymatic or heat-dependent hydration. This is a prerequisite for the S-specific NAD(P)H-hydrate dehydratase to allow the repair of both epimers of NAD(P)HX. The sequence is that of NAD(P)H-hydrate epimerase from Danio rerio (Zebrafish).